A 56-amino-acid chain; its full sequence is Keratin-associated protein 20-1 (56 aa).

It belongs to the KRTAP type 20 family. In terms of assembly, interacts with hair keratins.

Its function is as follows. In the hair cortex, hair keratin intermediate filaments are embedded in an interfilamentous matrix, consisting of hair keratin-associated proteins (KRTAP), which are essential for the formation of a rigid and resistant hair shaft through their extensive disulfide bond cross-linking with abundant cysteine residues of hair keratins. The matrix proteins include the high-sulfur and high-glycine-tyrosine keratins. The chain is Keratin-associated protein 20-1 (KRTAP20-1) from Homo sapiens (Human).